Reading from the N-terminus, the 220-residue chain is Flagellin A2 (220 aa).

A propeptide spanning residues 1-11 (MFNNITDDDRG) is cleaved from the precursor. 4 N-linked (GlcNAc...) asparagine glycosylation sites follow: asparagine 78, asparagine 95, asparagine 112, and asparagine 124.

This sequence belongs to the archaeal flagellin family. Post-translationally, glycosylated by a pentasaccharide similar to the S-layer glycoprotein, probably comprising a hexose, 2 hexuronic acids, a methyl ester of a hexuronic acid and mannose.

It localises to the archaeal flagellum. Functionally, flagellin that plays both structural and regulatory roles in flagella biosynthesis. Does not constitute a major flagellin in terms of abundance contrary to FlgA1: may regulate the flagella-dependent swimming motility depending on the relative abundance of FlgA1. Not involved in PibD-dependent surface adhesion. This is Flagellin A2 (flgA2) from Haloferax volcanii (strain ATCC 29605 / DSM 3757 / JCM 8879 / NBRC 14742 / NCIMB 2012 / VKM B-1768 / DS2) (Halobacterium volcanii).